Here is a 145-residue protein sequence, read N- to C-terminus: D-aminoacyl-tRNA deacylase (145 aa).

The Gly-cisPro motif, important for rejection of L-amino acids motif lies at 137–138; sequence GP.

This sequence belongs to the DTD family. Homodimer.

The protein resides in the cytoplasm. The enzyme catalyses glycyl-tRNA(Ala) + H2O = tRNA(Ala) + glycine + H(+). It carries out the reaction a D-aminoacyl-tRNA + H2O = a tRNA + a D-alpha-amino acid + H(+). Its function is as follows. An aminoacyl-tRNA editing enzyme that deacylates mischarged D-aminoacyl-tRNAs. Also deacylates mischarged glycyl-tRNA(Ala), protecting cells against glycine mischarging by AlaRS. Acts via tRNA-based rather than protein-based catalysis; rejects L-amino acids rather than detecting D-amino acids in the active site. By recycling D-aminoacyl-tRNA to D-amino acids and free tRNA molecules, this enzyme counteracts the toxicity associated with the formation of D-aminoacyl-tRNA entities in vivo and helps enforce protein L-homochirality. This Shewanella oneidensis (strain ATCC 700550 / JCM 31522 / CIP 106686 / LMG 19005 / NCIMB 14063 / MR-1) protein is D-aminoacyl-tRNA deacylase.